The chain runs to 51 residues: MTKEHEIINSIQEVSLEELDQIIGAGKNGVFKTISHECHLNTWAFLATCCS.

A propeptide spanning residues 1–25 (MTKEHEIINSIQEVSLEELDQIIGA) is cleaved from the precursor. Cross-links (beta-methyllanthionine (Thr-Cys)) lie at residues 33-38 (TISHEC) and 42-50 (TWAFLATCC). Residues 35 to 49 (SHECHLNTWAFLATC) constitute a cross-link (lanthionine (Ser-Cys)). Thr-48 carries the post-translational modification 2,3-didehydrobutyrine.

Belongs to the type A lantibiotic family. Maturation of lantibiotics involves the enzymatic conversion of Thr, and Ser into dehydrated AA and the formation of thioether bonds with cysteine. This is followed by membrane translocation and cleavage of the modified precursor.

Its subcellular location is the secreted. It is found in the cell surface. Its function is as follows. Lanthionine-containing peptide antibiotic (lantibiotic) active on certain Gram-positive bacteria. The bactericidal activity of lantibiotics is based on depolarization of energized bacterial cytoplasmic membranes, initiated by the formation of aqueous transmembrane pores. The polypeptide is Lantibiotic streptococcin A-M49 (scnA') (Streptococcus pyogenes serotype M49).